The chain runs to 967 residues: MPRFSVAEARRYGDQFVQFLRDPSREQESRREVLRDIYSQEFRTRTDIRTPSFSSILYALRVSHQAQVHGQTVHFKKARRRVVVADQYRRPRTDTEVSAPAPGQQPSSGPPAPQSRAKKWAEFIRGKHGVEIVSEYDQANGQIRFPVALDKTKTFTVQVQNHGAEAVTLHRCRPLRRLQELSFLDEQGVTQGQALVLHPGGAYPIQVRCLTSHNGFFRAVVMFEFSKEPDGSFSIGRSIAAIAQSPLARELGPSAPYRPYQASLQRPITVVTEDGVPPVSSLKNELEKEIPLGTYPYPKSLKETIMLGPKTSPDSSWMKMQSLLEAPLQPENYKQKFELLLHLEEIQLEVDIRRYDLQEVPMVQNRALLLLNVPGVAENRPSVLRGDHLFASLSSERDSSPRVLYKGYVHGVELERVQLGFSPKLMKKFVNDLKFDVTFTFNRLPLQVQHRAAAMAMQKGLDSVLFPSASCQRSLFTGIFQPRWFDRKVEANEEQCQAVKHIVTGMSRPAPYLIFGPPGTGKTVTLVEAIKQVWSCFKDARILACAPSNSAADLLCQRLLTNIAPRYIYRIMASSANYKDVPADVRPCCNWDDSEKCYVYPSKKLLKPYRILITTLVTAGRLVSANFPPGYFSHVFIDECGHAVEPESVVAIAGLLTTMDPDTNPNGGQLVLAGDPQQLGPVPRSPLAAQHGLGTSLLERLMLHNALYAKSDEGYNPQFVTKLLWNYRSHKAILKVPNELFYDSELKAYEGSEPDVRNFYCTWEELPNRGVPIIFHGVCGEDEREAKSPSFFNTAEIEVVVQYLQKLLQSQGRRGCPTISPKEIGIISPYRKQVEKIRLAITSKDPVLRALPDIGQLKVGSVEEFQGQERRVILISTVRSCSEYLQLDQTFRLGFLKNPKRLNVALTRAKALLIVVGNAAVLSKDPHWHRFLRYCRDEGAYRGYPYEEEPPEEDSLANHLDSLHLGN.

Positions 85–117 are disordered; it reads ADQYRRPRTDTEVSAPAPGQQPSSGPPAPQSRA. The segment covering 98–107 has biased composition (low complexity); sequence SAPAPGQQPS. Residue 516 to 523 coordinates ATP; it reads GPPGTGKT. A DEAG box motif is present at residues 638–641; it reads DECG.

The protein belongs to the DNA2/NAM7 helicase family. SDE3 subfamily.

The protein resides in the cytoplasm. It localises to the P-body. Its subcellular location is the cytoplasmic ribonucleoprotein granule. The protein localises to the stress granule. It is found in the nucleus. It catalyses the reaction ATP + H2O = ADP + phosphate + H(+). Functionally, 5' to 3' RNA helicase that is involved in a number of cellular roles ranging from mRNA metabolism and translation, modulation of viral infectivity, inhibition of retrotransposition, or regulation of synaptic transmission. Plays an important role in innate antiviral immunity by promoting type I interferon production. Required for microRNA (miRNA)-mediated gene silencing by the RNA-induced silencing complex (RISC). Required for both miRNA-mediated translational repression and miRNA-mediated cleavage of complementary mRNAs by RISC. In cooperation with FMR1, regulates miRNA-mediated translational repression by AGO2. Restricts retrotransposition of long interspersed element-1 (LINE-1). Required for embryonic viability and for normal central nervous system development and function. May function as a messenger ribonucleoprotein (mRNP) clearance factor. This chain is Putative helicase MOV-10 (MOV10), found in Gallus gallus (Chicken).